The following is a 317-amino-acid chain: Regulator of microtubule dynamics protein 1 (317 aa).

K168 is subject to N6-succinyllysine. TPR repeat units follow at residues 171 to 207 (AICIGDVGDYEGIKAKIANAYIIKEHFEKAIELNPKD) and 225 to 261 (PWYQRRIAKVLFATPPGSTYEEALGYFHRAEQVDPNF).

It belongs to the RMDN family. Interacts with microtubules.

The protein localises to the cytoplasm. The protein resides in the cytoskeleton. Its subcellular location is the spindle. It localises to the spindle pole. In Bos taurus (Bovine), this protein is Regulator of microtubule dynamics protein 1 (RMDN1).